An 871-amino-acid chain; its full sequence is Leucine--tRNA ligase (871 aa).

The short motif at 43 to 53 (PYPSGRIHIGH) is the 'HIGH' region element. The 'KMSKS' region signature appears at 629-633 (KMSKS). Lys632 lines the ATP pocket.

It belongs to the class-I aminoacyl-tRNA synthetase family.

Its subcellular location is the cytoplasm. It catalyses the reaction tRNA(Leu) + L-leucine + ATP = L-leucyl-tRNA(Leu) + AMP + diphosphate. The sequence is that of Leucine--tRNA ligase from Chelativorans sp. (strain BNC1).